Consider the following 203-residue polypeptide: Dephospho-CoA kinase (203 aa).

A DPCK domain is found at 10 to 203; it reads IIGITGNIGS…LTGGAKGGRG (194 aa). 18–23 serves as a coordination point for ATP; it reads GSGKST.

Belongs to the CoaE family.

It is found in the cytoplasm. The catalysed reaction is 3'-dephospho-CoA + ATP = ADP + CoA + H(+). The protein operates within cofactor biosynthesis; coenzyme A biosynthesis; CoA from (R)-pantothenate: step 5/5. Functionally, catalyzes the phosphorylation of the 3'-hydroxyl group of dephosphocoenzyme A to form coenzyme A. The chain is Dephospho-CoA kinase from Thermus thermophilus (strain ATCC BAA-163 / DSM 7039 / HB27).